Here is a 233-residue protein sequence, read N- to C-terminus: Antiholin-like protein LrgB (233 aa).

6 helical membrane passes run 5–25 (LGIN…VIAT), 33–53 (GFFL…FLKL), 63–83 (IGGD…AIPL), 97–117 (IFGG…LVAI), 152–172 (LTSL…AKIV), and 212–232 (IAVV…APIL).

Belongs to the CidB/LrgB family. LrgB subfamily.

It is found in the cell membrane. Inhibits the expression or activity of extracellular murein hydrolases by interacting, possibly with LrgA, with the holin-like proteins CidA and/or CidB. The LrgAB and CidAB proteins may affect the proton motive force of the membrane. May be involved in programmed cell death (PCD), possibly triggering PCD in response to antibiotics and environmental stresses. In Staphylococcus epidermidis (strain ATCC 12228 / FDA PCI 1200), this protein is Antiholin-like protein LrgB.